A 310-amino-acid polypeptide reads, in one-letter code: Acetylglutamate kinase (310 aa).

Residues Gly74–Gly75, Arg96, and Asn201 contribute to the substrate site.

It belongs to the acetylglutamate kinase family. ArgB subfamily.

The protein localises to the cytoplasm. The enzyme catalyses N-acetyl-L-glutamate + ATP = N-acetyl-L-glutamyl 5-phosphate + ADP. It functions in the pathway amino-acid biosynthesis; L-arginine biosynthesis; N(2)-acetyl-L-ornithine from L-glutamate: step 2/4. Its function is as follows. Catalyzes the ATP-dependent phosphorylation of N-acetyl-L-glutamate. This is Acetylglutamate kinase from Arthrobacter sp. (strain FB24).